The following is an 859-amino-acid chain: Collagen alpha-1(II) chain (859 aa).

Positions L1–P607 are disordered. 4-hydroxyproline is present on residues P31 and P40. Residue P42 is modified to 3-hydroxyproline. Residues P43 and P46 each carry the 4-hydroxyproline modification. Low complexity predominate over residues E78–Q121. Residues K136–P147 show a composition bias toward basic and acidic residues. 2 stretches are compositionally biased toward low complexity: residues P204–K220 and P249–V277. Residue P279 is modified to 3-hydroxyproline. The segment covering P279–P292 has biased composition (pro residues). 3 positions are modified to 4-hydroxyproline: P280, P286, and P292. The span at D306–P321 shows a compositional bias: low complexity. The span at R487–L501 shows a compositional bias: basic and acidic residues. The segment at G491–P586 is triple-helical region. At P516 the chain carries 3-hydroxyproline. Positions S520 to A529 are enriched in low complexity. At P553 the chain carries 4-hydroxyproline. P558 bears the 3-hydroxyproline mark. At P559 the chain carries 4-hydroxyproline. Positions P570–P586 are enriched in pro residues. The residue at position 573 (P573) is a 3-hydroxyproline. 2 positions are modified to 4-hydroxyproline: P574 and P577. P579 bears the 3-hydroxyproline mark. 2 positions are modified to 4-hydroxyproline: P580 and P583. P585 carries the 3-hydroxyproline modification. Position 586 is a 4-hydroxyproline (P586). The nonhelical region (C-terminal) stretch occupies residues G587 to A613. Positions D614 to L859 are cleaved as a propeptide — C-terminal propeptide. Residues V625–L859 enclose the Fibrillar collagen NC1 domain. Disulfide bonds link C655/C687, C695/C857, and C765/C810. D673, N675, Q676, C678, and D681 together coordinate Ca(2+). N-linked (GlcNAc...) asparagine glycosylation occurs at N760.

It belongs to the fibrillar collagen family. Homotrimers of alpha 1(II) chains. Contains mostly 4-hydroxyproline. Prolines at the third position of the tripeptide repeating unit (G-X-P) are 4-hydroxylated in some or all of the chains. Post-translationally, contains 3-hydroxyproline at a few sites. This modification occurs on the first proline residue in the sequence motif Gly-Pro-Hyp, where Hyp is 4-hydroxyproline. In terms of processing, lysine residues at the third position of the tripeptide repeating unit (G-X-Y) are 5-hydroxylated in some or all of the chains. O-glycosylated on hydroxylated lysine residues. The O-linked glycan consists of a Glc-Gal disaccharide.

Its subcellular location is the secreted. The protein localises to the extracellular space. The protein resides in the extracellular matrix. Functionally, type II collagen is specific for cartilaginous tissues. It is essential for the normal embryonic development of the skeleton, for linear growth and for the ability of cartilage to resist compressive forces. The protein is Collagen alpha-1(II) chain of Gallus gallus (Chicken).